We begin with the raw amino-acid sequence, 537 residues long: Tyrosine-protein kinase Fyn (537 aa).

A lipid anchor (N-myristoyl glycine) is attached at glycine 2. Residues cysteine 3 and cysteine 6 are each lipidated (S-palmitoyl cysteine). Position 12 is a phosphothreonine; by PKC (threonine 12). Positions 14–35 (LTEERDGSLNQSSGYRYGTDPT) are disordered. Phosphoserine is present on residues serine 21 and serine 26. The SH3 domain occupies 82 to 143 (TGVTLFVALY…PSNYVAPVDS (62 aa)). In terms of domain architecture, SH2 spans 149-246 (WYFGKLGRKD…GLCCRLVVPC (98 aa)). A Phosphotyrosine modification is found at tyrosine 185. One can recognise a Protein kinase domain in the interval 271–524 (LQLIKRLGNG…YLQSFLEDYF (254 aa)). Residues 277 to 285 (LGNGQFGEV) and lysine 299 contribute to the ATP site. Aspartate 390 acts as the Proton acceptor in catalysis. Position 420 is a phosphotyrosine; by autocatalysis (tyrosine 420). Phosphotyrosine; by CSK is present on tyrosine 531.

Belongs to the protein kinase superfamily. Tyr protein kinase family. SRC subfamily. Interacts (via its SH3 domain) with PIK3R1 and PRMT8. Interacts with FYB1, PAG1, and SH2D1A. Interacts with CD79A (tyrosine-phosphorylated form); the interaction increases FYN activity. Interacts (via SH2 domain) with CSF1R (tyrosine phosphorylated). Interacts with TOM1L1 (phosphorylated form). Interacts with KDR (tyrosine phosphorylated). Interacts (via SH3 domain) with KLHL2 (via N-terminus). Interacts with SH2D1A and SLAMF1. Interacts with ITCH; the interaction phosphorylates ITCH and negatively regulates its activity. Interacts with FASLG. Interacts with RUNX3. Interacts with KIT. Interacts with EPHA8; possible downstream effector of EPHA8 in regulation of cell adhesion. Interacts with PTK2/FAK1; this interaction leads to PTK2/FAK1 phosphorylation and activation. Interacts with CAV1; this interaction couples integrins to the Ras-ERK pathway. Interacts with UNC119. Interacts (via SH2 domain) with PTPRH (phosphorylated form). Interacts with PTPRO (phosphorylated form). Interacts with PTPRB (phosphorylated form). Interacts with FYB2. Interacts with DSCAM. Interacts with SKAP1 and FYB1; this interaction promotes the phosphorylation of CLNK. Interacts with NEDD9; in the presence of PTK2. In terms of assembly, (Microbial infection) Interacts (via its SH3 domain) with hepatitis E virus/HEV protein ORF3. Mn(2+) serves as cofactor. Post-translationally, autophosphorylated at Tyr-420. Phosphorylation on the C-terminal tail at Tyr-531 by CSK maintains the enzyme in an inactive state. PTPRC/CD45 dephosphorylates Tyr-531 leading to activation. Ultraviolet B (UVB) strongly increase phosphorylation at Thr-12 and kinase activity, and promotes translocation from the cytoplasm to the nucleus. Dephosphorylation at Tyr-420 by PTPN2 negatively regulates T-cell receptor signaling. Phosphorylated at tyrosine residues, which can be enhanced by NTN1. In terms of processing, palmitoylated. Palmitoylation at Cys-3 and Cys-6, probably by ZDHHC21, regulates subcellular location. Isoform 1 is highly expressed in the brain. Isoform 2 is expressed in cells of hemopoietic lineages, especially T-lymphocytes.

The protein localises to the cytoplasm. It is found in the nucleus. The protein resides in the cell membrane. It localises to the perikaryon. It catalyses the reaction L-tyrosyl-[protein] + ATP = O-phospho-L-tyrosyl-[protein] + ADP + H(+). Inhibited by phosphorylation of Tyr-531 by leukocyte common antigen and activated by dephosphorylation of this site. Its function is as follows. Non-receptor tyrosine-protein kinase that plays a role in many biological processes including regulation of cell growth and survival, cell adhesion, integrin-mediated signaling, cytoskeletal remodeling, cell motility, immune response and axon guidance. Inactive FYN is phosphorylated on its C-terminal tail within the catalytic domain. Following activation by PKA, the protein subsequently associates with PTK2/FAK1, allowing PTK2/FAK1 phosphorylation, activation and targeting to focal adhesions. Involved in the regulation of cell adhesion and motility through phosphorylation of CTNNB1 (beta-catenin) and CTNND1 (delta-catenin). Regulates cytoskeletal remodeling by phosphorylating several proteins including the actin regulator WAS and the microtubule-associated proteins MAP2 and MAPT. Promotes cell survival by phosphorylating AGAP2/PIKE-A and preventing its apoptotic cleavage. Participates in signal transduction pathways that regulate the integrity of the glomerular slit diaphragm (an essential part of the glomerular filter of the kidney) by phosphorylating several slit diaphragm components including NPHS1, KIRREL1 and TRPC6. Plays a role in neural processes by phosphorylating DPYSL2, a multifunctional adapter protein within the central nervous system, ARHGAP32, a regulator for Rho family GTPases implicated in various neural functions, and SNCA, a small pre-synaptic protein. Involved in reelin signaling by mediating phosphorylation of DAB1 following reelin (RELN)-binding to its receptor. Participates in the downstream signaling pathways that lead to T-cell differentiation and proliferation following T-cell receptor (TCR) stimulation. Phosphorylates PTK2B/PYK2 in response to T-cell receptor activation. Also participates in negative feedback regulation of TCR signaling through phosphorylation of PAG1, thereby promoting interaction between PAG1 and CSK and recruitment of CSK to lipid rafts. CSK maintains LCK and FYN in an inactive form. Promotes CD28-induced phosphorylation of VAV1. In mast cells, phosphorylates CLNK after activation of immunoglobulin epsilon receptor signaling. Can also promote CD244-mediated NK cell activation. The protein is Tyrosine-protein kinase Fyn (FYN) of Homo sapiens (Human).